Here is a 430-residue protein sequence, read N- to C-terminus: MNFDVVIIGGGLAGLTCGIALQEQGKRCAIVNNGQAAMDFSTGSIDLLGRLPNGENVQKVDRALAGLSEQLPAHPYAKLGAERVLAKAKQFEGMAAKLNLGLAGSVEQNHARVTPLGGLRRTWLSPDSVPTVRPNEAFPYNNIVILGIEGYHDFQPQLLADNLKLQPQFAHCEIKPGFLTIPELDFLRRQSREFRSVHIAQTLEQKVNPASLINEIRQAASGADVVFLPACFGQNSQAFFNELQAATDFMLFELPTLPPSLLGGRQHNILRQYFERLGGVMMNGDRALRAEFEGNRVVKLFTRIHEDEPLAADNYVLASGSFFSNGLVAEFERIYEPVFGADIVQTERFDPSDHFTWTTRRFSAPQPYQSAGVVINTDCRVQKCGRFFDNLYAAGAVIGGFNGIELGCGSGVAVVTALTVADEIAEKSGG.

Belongs to the anaerobic G-3-P dehydrogenase subunit B family. As to quaternary structure, composed of a catalytic GlpA/B dimer and of membrane bound GlpC. The cofactor is FMN.

It catalyses the reaction a quinone + sn-glycerol 3-phosphate = dihydroxyacetone phosphate + a quinol. Its pathway is polyol metabolism; glycerol degradation via glycerol kinase pathway; glycerone phosphate from sn-glycerol 3-phosphate (anaerobic route): step 1/1. Its function is as follows. Conversion of glycerol 3-phosphate to dihydroxyacetone. Uses fumarate or nitrate as electron acceptor. The polypeptide is Anaerobic glycerol-3-phosphate dehydrogenase subunit B (Actinobacillus succinogenes (strain ATCC 55618 / DSM 22257 / CCUG 43843 / 130Z)).